Consider the following 118-residue polypeptide: Small ribosomal subunit protein uS13 (118 aa).

The disordered stretch occupies residues 94–118 (SLPLRGQRTKTNARTRKGPRKPIKK).

This sequence belongs to the universal ribosomal protein uS13 family. As to quaternary structure, part of the 30S ribosomal subunit. Forms a loose heterodimer with protein S19. Forms two bridges to the 50S subunit in the 70S ribosome.

In terms of biological role, located at the top of the head of the 30S subunit, it contacts several helices of the 16S rRNA. In the 70S ribosome it contacts the 23S rRNA (bridge B1a) and protein L5 of the 50S subunit (bridge B1b), connecting the 2 subunits; these bridges are implicated in subunit movement. Contacts the tRNAs in the A and P-sites. In Shewanella amazonensis (strain ATCC BAA-1098 / SB2B), this protein is Small ribosomal subunit protein uS13.